The primary structure comprises 189 residues: Transcription factor FapR (189 aa).

Belongs to the FapR family.

Its function is as follows. Transcriptional factor involved in regulation of membrane lipid biosynthesis by repressing genes involved in fatty acid and phospholipid metabolism. In Exiguobacterium sp. (strain ATCC BAA-1283 / AT1b), this protein is Transcription factor FapR.